The following is a 388-amino-acid chain: Subtilisin-like serine protease AsES (388 aa).

Positions Met-1–Gly-15 are cleaved as a signal peptide. Residues Ala-16–Ala-105 constitute a propeptide, removed in mature form. Positions Pro-114–Gly-388 constitute a Peptidase S8 domain. Cys-141 and Cys-230 form a disulfide bridge. Residues Asp-146 and His-176 each act as charge relay system in the active site. N-linked (GlcNAc...) asparagine glycosylation is found at Asn-232 and Asn-237. Cys-285 and Cys-357 are joined by a disulfide. Ser-331 functions as the Charge relay system in the catalytic mechanism.

The protein belongs to the peptidase S8 family.

The protein localises to the secreted. With respect to regulation, the elicitor proteolytic activity is completely inhibited by PMSF. The activity is also significantly reduced by aprotinin (leading to 37% residual activity), by leupeptin (leading to 54% residual activity), by the ovomucoid trypsin inhibitor (leading to 65% residual activity), and by p-aminobenzamidine (leading to 26% residual activity). Extracellular elicitor protein that induces a strong defense response in strawberry and confers both local and systemic plant resistance against the fungal pathogen Colletotricum acutatum, the casual agent of anthracnose disease. AsES activates a cascade of defense responses, including calcium influx, oxidative burst, hypersensitive cell-death response (HR), accumulation of autofluorescent compounds, cell-wall reinforcement with callose and lignin deposition, salicylic acid accumulation, and expression of defense-related genes, such as PR1, PG1, MYB30, RBOH-D, RBOH-F, CHI23, and FLS. The oxidative burst consists in a progressive extracellular accumulation of H(2)O(2) that starts immediately after the contact with AsES and is preceded by a rapid and transient cell membrane depolarization. During this phase takes place also a rapid intracellular accumulation of NO at the chloroplasts. After the first extracellular H(2)O(2) production phase, two intracellular H(2)O(2) accumulation events occur, the first 2 hours after induction, and the second 7 hours after induction. AsES also produces a transient increase of ion leakage, and a progressive alkalinization of the extracellular medium. Confers also local and systemic plant resistance against Botrytis cinerea in Arabidopsis thaliana. Systemic, but not local resistance is dependent on the length of exposure to AsES. The protection to B.cinerea is due to the induction of the plant defenses via the salicylic acid, jasmonic acid and ethylene signaling pathways. Exhibits subtilisin-like proteolytic activity which is necessary but not sufficient for its elicitor function in strawberry plants. Probably induces defense by means of proteolysis of one or multiple host proteins that are specific targets of this protease. The sequence is that of Subtilisin-like serine protease AsES from Sarocladium strictum (Black bundle disease fungus).